The primary structure comprises 228 residues: ATP-dependent dethiobiotin synthetase BioD 1 (228 aa).

13-18 (EVGKTV) is a binding site for ATP. Mg(2+) is bound at residue Thr17. The active site involves Lys38. Ser42 is a binding site for substrate. Residues Asp55, 116–119 (EGAG), 176–177 (ND), and 205–207 (PWL) each bind ATP. Mg(2+) contacts are provided by Asp55 and Glu116.

Belongs to the dethiobiotin synthetase family. In terms of assembly, homodimer. Mg(2+) is required as a cofactor.

Its subcellular location is the cytoplasm. The catalysed reaction is (7R,8S)-7,8-diammoniononanoate + CO2 + ATP = (4R,5S)-dethiobiotin + ADP + phosphate + 3 H(+). It participates in cofactor biosynthesis; biotin biosynthesis; biotin from 7,8-diaminononanoate: step 1/2. Its function is as follows. Catalyzes a mechanistically unusual reaction, the ATP-dependent insertion of CO2 between the N7 and N8 nitrogen atoms of 7,8-diaminopelargonic acid (DAPA, also called 7,8-diammoniononanoate) to form a ureido ring. This Salmonella typhimurium (strain LT2 / SGSC1412 / ATCC 700720) protein is ATP-dependent dethiobiotin synthetase BioD 1.